The sequence spans 320 residues: Cytochrome f (320 aa).

An N-terminal signal peptide occupies residues 1 to 35; sequence MQTINTFSWIKEQITRSISISLILYIITRSSIANA. Heme is bound by residues Tyr-36, Cys-56, Cys-59, and His-60. Residues 286–305 traverse the membrane as a helical segment; it reads IQGLLFFFASVILAQIFLVL.

The protein belongs to the cytochrome f family. As to quaternary structure, the 4 large subunits of the cytochrome b6-f complex are cytochrome b6, subunit IV (17 kDa polypeptide, petD), cytochrome f and the Rieske protein, while the 4 small subunits are PetG, PetL, PetM and PetN. The complex functions as a dimer. Heme serves as cofactor.

The protein resides in the plastid. It localises to the chloroplast thylakoid membrane. Its function is as follows. Component of the cytochrome b6-f complex, which mediates electron transfer between photosystem II (PSII) and photosystem I (PSI), cyclic electron flow around PSI, and state transitions. This is Cytochrome f (petA) from Spinacia oleracea (Spinach).